A 273-amino-acid chain; its full sequence is Dermonecrotic toxin LsaSicTox-alphaIB1ai (273 aa).

Histidine 5 is a catalytic residue. Glutamate 25 and aspartate 27 together coordinate Mg(2+). Histidine 41 serves as the catalytic Nucleophile. 2 cysteine pairs are disulfide-bonded: cysteine 45–cysteine 51 and cysteine 47–cysteine 190. Aspartate 85 is a Mg(2+) binding site.

The protein belongs to the arthropod phospholipase D family. Class II subfamily. Mg(2+) is required as a cofactor. Expressed by the venom gland.

The protein localises to the secreted. It catalyses the reaction an N-(acyl)-sphingosylphosphocholine = an N-(acyl)-sphingosyl-1,3-cyclic phosphate + choline. The enzyme catalyses an N-(acyl)-sphingosylphosphoethanolamine = an N-(acyl)-sphingosyl-1,3-cyclic phosphate + ethanolamine. The catalysed reaction is a 1-acyl-sn-glycero-3-phosphocholine = a 1-acyl-sn-glycero-2,3-cyclic phosphate + choline. It carries out the reaction a 1-acyl-sn-glycero-3-phosphoethanolamine = a 1-acyl-sn-glycero-2,3-cyclic phosphate + ethanolamine. Its function is as follows. Dermonecrotic toxins cleave the phosphodiester linkage between the phosphate and headgroup of certain phospholipids (sphingolipid and lysolipid substrates), forming an alcohol (often choline) and a cyclic phosphate. This toxin acts on sphingomyelin (SM). It may also act on ceramide phosphoethanolamine (CPE), lysophosphatidylcholine (LPC) and lysophosphatidylethanolamine (LPE), but not on lysophosphatidylserine (LPS), and lysophosphatidylglycerol (LPG). It acts by transphosphatidylation, releasing exclusively cyclic phosphate products as second products. Induces dermonecrosis, hemolysis, increased vascular permeability, edema, inflammatory response, and platelet aggregation. In Loxosceles sabina (Tucson recluse spider), this protein is Dermonecrotic toxin LsaSicTox-alphaIB1ai.